The sequence spans 95 residues: Aspartyl/glutamyl-tRNA(Asn/Gln) amidotransferase subunit C (95 aa).

The interval 74 to 95 (GQALEPAPDADNEHFLVPQVVE) is disordered.

It belongs to the GatC family. As to quaternary structure, heterotrimer of A, B and C subunits.

It carries out the reaction L-glutamyl-tRNA(Gln) + L-glutamine + ATP + H2O = L-glutaminyl-tRNA(Gln) + L-glutamate + ADP + phosphate + H(+). The catalysed reaction is L-aspartyl-tRNA(Asn) + L-glutamine + ATP + H2O = L-asparaginyl-tRNA(Asn) + L-glutamate + ADP + phosphate + 2 H(+). Its function is as follows. Allows the formation of correctly charged Asn-tRNA(Asn) or Gln-tRNA(Gln) through the transamidation of misacylated Asp-tRNA(Asn) or Glu-tRNA(Gln) in organisms which lack either or both of asparaginyl-tRNA or glutaminyl-tRNA synthetases. The reaction takes place in the presence of glutamine and ATP through an activated phospho-Asp-tRNA(Asn) or phospho-Glu-tRNA(Gln). The chain is Aspartyl/glutamyl-tRNA(Asn/Gln) amidotransferase subunit C from Salinibacter ruber (strain DSM 13855 / M31).